A 94-amino-acid polypeptide reads, in one-letter code: MKFFMVFVVTFCLAVCFVSQSLAIPADAANDAHFVDGVQALKEIEPELHGRYKRATCDLLSGTGINHSACAAHCLLRGNRGGYCNGKGVCVCRN.

The signal sequence occupies residues 1-23 (MKFFMVFVVTFCLAVCFVSQSLA). The propeptide occupies 24–54 (IPADAANDAHFVDGVQALKEIEPELHGRYKR). 3 disulfide bridges follow: Cys57–Cys84, Cys70–Cys90, and Cys74–Cys92.

This sequence belongs to the invertebrate defensin family. Type 1 subfamily.

The protein resides in the secreted. Responsible for the anti Gram-positive activity of immune hemolymph of P.terraenovae. The chain is Phormicin from Protophormia terraenovae (Northern blowfly).